A 119-amino-acid chain; its full sequence is Fluoride-specific ion channel FluC 2 (119 aa).

A helical membrane pass occupies residues 46–66 (FALGLLTFAGVTGDAALLVGV). Na(+)-binding residues include glycine 70 and threonine 73. The chain crosses the membrane as a helical span at residues 96-116 (LNAVGNLACALVGIGLAWGIV).

Belongs to the fluoride channel Fluc/FEX (TC 1.A.43) family.

The protein resides in the cell membrane. It catalyses the reaction fluoride(in) = fluoride(out). With respect to regulation, na(+) is not transported, but it plays an essential structural role and its presence is essential for fluoride channel function. In terms of biological role, fluoride-specific ion channel. Important for reducing fluoride concentration in the cell, thus reducing its toxicity. The polypeptide is Fluoride-specific ion channel FluC 2 (Haloarcula marismortui (strain ATCC 43049 / DSM 3752 / JCM 8966 / VKM B-1809) (Halobacterium marismortui)).